The chain runs to 180 residues: Large ribosomal subunit protein uL10 (180 aa).

This sequence belongs to the universal ribosomal protein uL10 family. In terms of assembly, part of the ribosomal stalk of the 50S ribosomal subunit. The N-terminus interacts with L11 and the large rRNA to form the base of the stalk. The C-terminus forms an elongated spine to which L12 dimers bind in a sequential fashion forming a multimeric L10(L12)X complex.

Forms part of the ribosomal stalk, playing a central role in the interaction of the ribosome with GTP-bound translation factors. The chain is Large ribosomal subunit protein uL10 from Thermosipho melanesiensis (strain DSM 12029 / CIP 104789 / BI429).